The primary structure comprises 157 residues: uncharacterized protein (157 aa).

The N-acetyltransferase domain occupies 9–146; the sequence is LLINYKTLDE…GDFYVWHPET (138 aa).

This is an uncharacterized protein from Bacillus cereus (strain ZK / E33L).